Consider the following 295-residue polypeptide: Tyrosine recombinase XerD (295 aa).

The Core-binding (CB) domain maps to 1 to 85; it reads METIIEEYLK…TIRSFHQFAL (85 aa). In terms of domain architecture, Tyr recombinase spans 106-289; the sequence is KLPDVLDVEE…SKTQIRQMYN (184 aa). Catalysis depends on residues Arg146, Lys170, His241, Arg244, and His267. The O-(3'-phospho-DNA)-tyrosine intermediate role is filled by Tyr276.

Belongs to the 'phage' integrase family. XerD subfamily. In terms of assembly, forms a cyclic heterotetrameric complex composed of two molecules of XerC and two molecules of XerD.

It localises to the cytoplasm. Its function is as follows. Site-specific tyrosine recombinase, which acts by catalyzing the cutting and rejoining of the recombining DNA molecules. The XerC-XerD complex is essential to convert dimers of the bacterial chromosome into monomers to permit their segregation at cell division. It also contributes to the segregational stability of plasmids. The sequence is that of Tyrosine recombinase XerD from Staphylococcus haemolyticus (strain JCSC1435).